The following is a 233-amino-acid chain: Large ribosomal subunit protein uL1 (233 aa).

It belongs to the universal ribosomal protein uL1 family. As to quaternary structure, part of the 50S ribosomal subunit.

Binds directly to 23S rRNA. The L1 stalk is quite mobile in the ribosome, and is involved in E site tRNA release. Functionally, protein L1 is also a translational repressor protein, it controls the translation of the L11 operon by binding to its mRNA. This is Large ribosomal subunit protein uL1 from Shewanella baltica (strain OS185).